Here is a 352-residue protein sequence, read N- to C-terminus: Protein CIA1 (352 aa).

WD repeat units follow at residues 18 to 64, 72 to 111, 116 to 155, 161 to 200, 211 to 250, 265 to 303, and 315 to 352; these read GHTD…RSWT, THTR…FECI, GHEN…EYDC, GHTQ…GEYQ, GHSS…MQSG, YHDR…SVDG, and AHEN…ATKP.

It belongs to the WD repeat CIA1 family. Part of a complex composed of AE7, CIA1, MMS19 and NAR1. Interacts with AE7 and NAR1.

The protein resides in the nucleus. It localises to the cytoplasm. Its function is as follows. Essential component of the cytosolic iron-sulfur (Fe-S) protein assembly (CIA) machinery. Required for the maturation of extramitochondrial Fe/S proteins. This Arabidopsis thaliana (Mouse-ear cress) protein is Protein CIA1.